We begin with the raw amino-acid sequence, 122 residues long: Protein C10 (122 aa).

Belongs to the UPF0456 family.

It is found in the cytoplasm. The protein is Protein C10 of Danio rerio (Zebrafish).